The chain runs to 435 residues: MPALCATYLIHSGNLRACLRIVPLTKPSVVIAYRHLSKSSSKIAPAAALNTAPIEFTPNTSAASLHERSTVIKDAARSALRCNDTTPTPALPFDVKRVDKANRAAGRKLPAASGVLSAYALMGPYIQLAKPRLTVLVMLSAICSYALSPYPATVLELLSLTVGTTLCSAAANGINMGREPDFDRQMMRTQARPVVRGLVTPMQAYKFSAVSGVIGTAILYAGVNPTVALLGASNIVLYSWFYTSLKRKHIINTWFGAITGAIPPLMGWAAASPLTHPGCWCLAGLLYAWQFPHFNTLSHNIRNEYKNAGHVMTAWKNPKLNARVALRYSLLMFPLCFGLSYYGITDWTYQIDSALVNGWMSFWAFKFWWQQRYNYSKKVYNNKAEFNKGMVLANVYARKTFWVSVLHLPAVLILAIVHKKGRWDWLFSDEGKLVA.

The N-terminal 35 residues, 1–35 (MPALCATYLIHSGNLRACLRIVPLTKPSVVIAYRH), are a transit peptide targeting the mitochondrion. 6 helical membrane-spanning segments follow: residues 135–155 (VLVMLSAICSYALSPYPATVL), 157–177 (LLSLTVGTTLCSAAANGINMG), 212–232 (GVIGTAILYAGVNPTVALLGA), 250–270 (IINTWFGAITGAIPPLMGWAA), 324–344 (VALRYSLLMFPLCFGLSYYGI), and 401–421 (FWVSVLHLPAVLILAIVHKKG).

Belongs to the UbiA prenyltransferase family.

Its subcellular location is the mitochondrion membrane. Its function is as follows. Converts protoheme IX and farnesyl diphosphate to heme O. This chain is Protoheme IX farnesyltransferase, mitochondrial (COX10), found in Eremothecium gossypii (strain ATCC 10895 / CBS 109.51 / FGSC 9923 / NRRL Y-1056) (Yeast).